A 214-amino-acid chain; its full sequence is Variable small protein 1 (214 aa).

A signal peptide spans 1 to 18; the sequence is MRKRISAIIMTLFMVFMS. The N-palmitoyl cysteine moiety is linked to residue cysteine 19. Residue cysteine 19 is the site of S-diacylglycerol cysteine attachment.

It belongs to the variable small protein (Vsp) family.

Its subcellular location is the cell outer membrane. Its function is as follows. The Vlp and Vsp proteins are antigenically distinct proteins, only one vlp or vsp gene is transcriptionally active at any one time. Switching between these genes is a mechanism of host immune response evasion. In Borrelia hermsii, this protein is Variable small protein 1.